The following is a 236-amino-acid chain: (5-formylfuran-3-yl)methyl phosphate synthase (236 aa).

The active-site Schiff-base intermediate with substrate is Lys27. Lys85 functions as the Proton acceptor in the catalytic mechanism.

The protein belongs to the MfnB family.

The catalysed reaction is 2 D-glyceraldehyde 3-phosphate = 4-(hydroxymethyl)-2-furancarboxaldehyde phosphate + phosphate + 2 H2O. It functions in the pathway cofactor biosynthesis; methanofuran biosynthesis. Functionally, catalyzes the formation of 4-(hydroxymethyl)-2-furancarboxaldehyde phosphate (4-HFC-P) from two molecules of glyceraldehyde-3-P (GA-3-P). In Methanococcus maripaludis (strain DSM 14266 / JCM 13030 / NBRC 101832 / S2 / LL), this protein is (5-formylfuran-3-yl)methyl phosphate synthase.